The following is a 476-amino-acid chain: Proline--tRNA ligase (476 aa).

It belongs to the class-II aminoacyl-tRNA synthetase family. ProS type 3 subfamily. Homodimer.

It localises to the cytoplasm. It carries out the reaction tRNA(Pro) + L-proline + ATP = L-prolyl-tRNA(Pro) + AMP + diphosphate. In terms of biological role, catalyzes the attachment of proline to tRNA(Pro) in a two-step reaction: proline is first activated by ATP to form Pro-AMP and then transferred to the acceptor end of tRNA(Pro). This Rubrobacter xylanophilus (strain DSM 9941 / JCM 11954 / NBRC 16129 / PRD-1) protein is Proline--tRNA ligase.